We begin with the raw amino-acid sequence, 139 residues long: uncharacterized protein (139 aa).

The disordered stretch occupies residues 1–26 (MQLVREKRGAHQHVPRKTTEPQKVRG). Positions 17–26 (KTTEPQKVRG) are enriched in basic and acidic residues.

This is an uncharacterized protein from Ictalurid herpesvirus 1 (strain Auburn) (IcHV-1).